The chain runs to 189 residues: Small ribosomal subunit protein uS5 (189 aa).

Residues 22-85 enclose the S5 DRBM domain; it reads FVDKLVAINR…EAAKRDLIFV (64 aa).

Belongs to the universal ribosomal protein uS5 family. Part of the 30S ribosomal subunit. Contacts proteins S4 and S8.

Functionally, with S4 and S12 plays an important role in translational accuracy. Its function is as follows. Located at the back of the 30S subunit body where it stabilizes the conformation of the head with respect to the body. The chain is Small ribosomal subunit protein uS5 from Sinorhizobium fredii (strain NBRC 101917 / NGR234).